Reading from the N-terminus, the 275-residue chain is Ribosomal protein L11 methyltransferase (275 aa).

4 residues coordinate S-adenosyl-L-methionine: threonine 123, glycine 146, aspartate 167, and asparagine 208.

It belongs to the methyltransferase superfamily. PrmA family.

The protein localises to the cytoplasm. The catalysed reaction is L-lysyl-[protein] + 3 S-adenosyl-L-methionine = N(6),N(6),N(6)-trimethyl-L-lysyl-[protein] + 3 S-adenosyl-L-homocysteine + 3 H(+). Its function is as follows. Methylates ribosomal protein L11. The chain is Ribosomal protein L11 methyltransferase from Campylobacter fetus subsp. fetus (strain 82-40).